A 152-amino-acid polypeptide reads, in one-letter code: VQ motif-containing protein 8, chloroplastic (152 aa).

The tract at residues 1-42 (MIPTRCNEINGSRPSSLKLAGESHTIKKTSSCKSKPRPHGRA) is disordered. The transit peptide at 1–58 (MIPTRCNEINGSRPSSLKLAGESHTIKKTSSCKSKPRPHGRASPVIIYAHSPKVIHTR) directs the protein to the chloroplast. Positions 62 to 71 (FMALVQRLTG) match the VQ motif. Residues 80–108 (TSESSSSVVTEEVNVGDDNTAAPFSQDRT) are disordered. A compositionally biased stretch (low complexity) spans 81-92 (SESSSSVVTEEV).

The protein resides in the plastid. It is found in the chloroplast. Functionally, may be involved in chloroplast development. This chain is VQ motif-containing protein 8, chloroplastic, found in Arabidopsis thaliana (Mouse-ear cress).